A 1385-amino-acid chain; its full sequence is MAERANLVFHNKVIDGTAIKRLISRLIDHFGMAYTSHILDQVKTLGFQQATATSISLGIDDLLTIPSKGWLVQDAEQQSLILEKHHHYGNVHAVEKLRQSIEIWYATSEYLRQEMNPNFRMTDPFNPVHMMSFSGARGNASQVHQLVGMRGLMSDPQGQMIDLPIQSNLREGLSLTEYIISCYGARKGVVDTAVRTSDAGYLTRRLVEVVQHIVVRRTDCGTIRGISVSPRNKNRMMSERIFIQTLIGRVLADDIYIGSRCVAFRNQDLGIGLVNRFITFGTQSISIRTPFTCRSTSWICRFCYGRSPTHGDLVELGEAVGIIAGQSIGEPGTQLTLRTFHTGGVFTGGTAEHVRAPYNGKIKFNEDLVHPTRTRHGHPAFLCYIDLSVIIESEDIIHSVTIPPKSFLLVQNDQYVESEQVIAEIREGTYTFRFKERVRKYIYSDSEGEMHWSTDVYHAPEFTYSNVHLVPKTSHLWILSGGSCGASLILFSIHKDQDQMNIPFLSVKRKSICSLSVNNDQVSQKFFSSDFSDKKKSGIPDYSELNGIVGTSHYNLIYSAIFHENSDLLAKRRRNRFLIPFESIQEQEQEKEFMPHSGISIAIPINGIFRKNTIFSFFDDPRYRRKSSGILKYGTIEADSIIQKEDMIEYRGVHKFKKNYKMKVDRFFFIPEEVHILPESSVIMVQNYSIIRVDTRITLNIRSQVGGLIRVERKKKRIELKIFSGDIHFPDKTDKISRHSGILIPPGRGKPNSRESKKVKNWIYVQRITPTKKKFFVLVRPVATYEIADSINLATLFPQDLFREKNNIQLRVVNYILYGNGKPTRGISDTSIQLVRTCLVLNWDQDNKNSSLEEARAFFVAVSTKGLIRDFIRIGLVKSHISYIRKRNNPPDSGLISADHMNPFYSISPKAGIQQSLSQNNGTIRMFLNRNKESQFLLILSSSNCFRMGPFDHVKYHNVINQSIKKNPLITIKNASGPLGTTIQISNFYSFFPLLTYNKMSVIKYLQLDNLKQILKVINSYLIDENGRICNRDPYSNVVLNPFKLNWYFLHQNYHHNYCEEMSTLISLGQFFCENVCIAKKGPHLKSGQALIVQMDSVVIRSAKPYLATPGAKVHGHYGEILYEGDTLVTFIYEKSRSGDITQGLPKVEQVLEVRSIDSISMNLEKRIKGWNKYITGILGIPWGFLVGAELTIVQSRLSLVNKIQKVYRSQGVQIHNRHIEIIVRQITSKVLVSEEGMSNVFLPGELIGLLRAERTGRALEEAISYRAILLGITRASLNTQSFISEASFQETARVLAKAALRGRIDWLKGLKENVVLGGGIPAGTGFNKGLVHCSRQHTNILLEKKTKNFCLFEEDMRDILFYHREFFDSSISKFERSFLGFNDS.

Zn(2+)-binding residues include C220, C293, C300, and C303.

The protein belongs to the RNA polymerase beta' chain family. RpoC2 subfamily. As to quaternary structure, in plastids the minimal PEP RNA polymerase catalytic core is composed of four subunits: alpha, beta, beta', and beta''. When a (nuclear-encoded) sigma factor is associated with the core the holoenzyme is formed, which can initiate transcription. It depends on Zn(2+) as a cofactor.

The protein localises to the plastid. Its subcellular location is the chloroplast. The enzyme catalyses RNA(n) + a ribonucleoside 5'-triphosphate = RNA(n+1) + diphosphate. Its function is as follows. DNA-dependent RNA polymerase catalyzes the transcription of DNA into RNA using the four ribonucleoside triphosphates as substrates. The polypeptide is DNA-directed RNA polymerase subunit beta'' (Aethionema cordifolium (Lebanon stonecress)).